Consider the following 313-residue polypeptide: Olfactory receptor 51A2 (313 aa).

Topologically, residues 1 to 27 (MSIINTSYVEITTFFLVGMPGLEYAHI) are extracellular. N5 carries an N-linked (GlcNAc...) asparagine glycan. A helical transmembrane segment spans residues 28–48 (WISIPICSMYLIAILGNGTIL). Residues 49-56 (FIIKTEPS) are Cytoplasmic-facing. A helical transmembrane segment spans residues 57-77 (LHGPMYYFLSMLAMSDLGLSL). Residues 78-101 (SSLPTVLSIFLFNAPETSSSACFA) lie on the Extracellular side of the membrane. An intrachain disulfide couples C99 to C191. The chain crosses the membrane as a helical span at residues 102–122 (QEFFIHGFSVLESSVLLIMSF). The Cytoplasmic segment spans residues 123 to 141 (DRFLAIHNPLRYTSILTTV). A helical membrane pass occupies residues 142–162 (RVAQIGIVFSFKSMLLVLPFP). Residues 163–198 (FTLRSLRYCKKNQLSHSYCLHQDVMKLACSDNRIDV) lie on the Extracellular side of the membrane. The chain crosses the membrane as a helical span at residues 199–218 (IYGFFGALCLMVDFILIAVS). Residues 219–238 (YTLILKTVPGIASKKEELKA) are Cytoplasmic-facing. Residues 239-259 (LNTCVSHICAVIIFYLPIINL) traverse the membrane as a helical segment. The Extracellular portion of the chain corresponds to 260 to 274 (AVVHRFAGHVSPLIN). Residues 275–295 (VLMANVLLLVPPLMKPIVYCV) form a helical membrane-spanning segment. Over 296–313 (KTKQIRVRVVAKLCQWKI) the chain is Cytoplasmic.

The protein belongs to the G-protein coupled receptor 1 family.

It localises to the cell membrane. In terms of biological role, odorant receptor. This Homo sapiens (Human) protein is Olfactory receptor 51A2 (OR51A2).